Here is a 239-residue protein sequence, read N- to C-terminus: Geranylgeranylglyceryl phosphate synthase (239 aa).

Mg(2+) is bound by residues Asp19 and Ser48. Residues 167–173 (YLEAGSG), 197–198 (GG), and 219–220 (GT) each bind sn-glycerol 1-phosphate.

It belongs to the GGGP/HepGP synthase family. Group II subfamily. Mg(2+) is required as a cofactor.

It is found in the cytoplasm. The enzyme catalyses sn-glycerol 1-phosphate + (2E,6E,10E)-geranylgeranyl diphosphate = sn-3-O-(geranylgeranyl)glycerol 1-phosphate + diphosphate. Its pathway is membrane lipid metabolism; glycerophospholipid metabolism. Its function is as follows. Prenyltransferase that catalyzes the transfer of the geranylgeranyl moiety of geranylgeranyl diphosphate (GGPP) to the C3 hydroxyl of sn-glycerol-1-phosphate (G1P). This reaction is the first ether-bond-formation step in the biosynthesis of archaeal membrane lipids. The chain is Geranylgeranylglyceryl phosphate synthase from Methanopyrus kandleri (strain AV19 / DSM 6324 / JCM 9639 / NBRC 100938).